A 465-amino-acid polypeptide reads, in one-letter code: Ribulose bisphosphate carboxylase large chain (465 aa).

N6,N6,N6-trimethyllysine is present on K4. Positions 113 and 163 each coordinate substrate. Residue K165 is the Proton acceptor of the active site. K167 lines the substrate pocket. Positions 191, 193, and 194 each coordinate Mg(2+). The residue at position 191 (K191) is an N6-carboxylysine. The active-site Proton acceptor is the H284. Residues R285, H317, and S369 each coordinate substrate.

It belongs to the RuBisCO large chain family. Type I subfamily. In terms of assembly, heterohexadecamer of 8 large chains and 8 small chains; disulfide-linked. The disulfide link is formed within the large subunit homodimers. The cofactor is Mg(2+). In terms of processing, the disulfide bond which can form in the large chain dimeric partners within the hexadecamer appears to be associated with oxidative stress and protein turnover.

It is found in the plastid. It localises to the chloroplast. The catalysed reaction is 2 (2R)-3-phosphoglycerate + 2 H(+) = D-ribulose 1,5-bisphosphate + CO2 + H2O. It catalyses the reaction D-ribulose 1,5-bisphosphate + O2 = 2-phosphoglycolate + (2R)-3-phosphoglycerate + 2 H(+). RuBisCO catalyzes two reactions: the carboxylation of D-ribulose 1,5-bisphosphate, the primary event in carbon dioxide fixation, as well as the oxidative fragmentation of the pentose substrate in the photorespiration process. Both reactions occur simultaneously and in competition at the same active site. The chain is Ribulose bisphosphate carboxylase large chain from Bauera rubioides (Dog rose).